The chain runs to 419 residues: Histone acetyltransferase type B subunit 2 (419 aa).

WD repeat units lie at residues 131 to 171 (PHDG…VEAL), 177 to 217 (YHTE…KNIK), 225 to 265 (AHTD…IIHN), 267 to 307 (NTKK…NPLY), and 311 to 351 (GHED…AEQT). An interaction with the histone H4 N-terminus region spans residues 353-357 (DEIED). The WD 6 repeat unit spans residues 368 to 408 (GHKTSINDIAVNPNINWLVASAEEDNIVQIWKCSSNIPRIG).

Belongs to the WD repeat RBAP46/RBAP48/MSI1 family. Component of the HAT-B complex composed of at least HAT1 and HAT2. The HAT-B complex binds to histone H4 tail.

Its subcellular location is the cytoplasm. The protein resides in the nucleus. In terms of biological role, regulatory subunit of the histone acetylase B (HAT-B) complex. The complex acetylates Lys-12 of histone H4 which is required for telomeric silencing. This Candida glabrata (strain ATCC 2001 / BCRC 20586 / JCM 3761 / NBRC 0622 / NRRL Y-65 / CBS 138) (Yeast) protein is Histone acetyltransferase type B subunit 2 (HAT2).